The sequence spans 483 residues: 1-aminocyclopropane-1-carboxylate synthase 2 (483 aa).

At lysine 275 the chain carries N6-(pyridoxal phosphate)lysine.

The protein belongs to the class-I pyridoxal-phosphate-dependent aminotransferase family. The cofactor is pyridoxal 5'-phosphate.

It catalyses the reaction S-adenosyl-L-methionine = 1-aminocyclopropane-1-carboxylate + S-methyl-5'-thioadenosine + H(+). The protein operates within alkene biosynthesis; ethylene biosynthesis via S-adenosyl-L-methionine; ethylene from S-adenosyl-L-methionine: step 1/2. In terms of biological role, catalyzes the formation of 1-aminocyclopropane-1-carboxylate, a direct precursor of ethylene in higher plants. Involved in defense response by producing ethylene after pathogen infection. Involved in several phosphate deficiency-induced adaptive responses, such as lateral root elongation. The protein is 1-aminocyclopropane-1-carboxylate synthase 2 of Oryza sativa subsp. japonica (Rice).